A 470-amino-acid polypeptide reads, in one-letter code: GTPase Der (470 aa).

EngA-type G domains are found at residues K2–A165 and I201–S372. GTP contacts are provided by residues G8–S15, D55–I59, N117–D120, G207–S214, D254–I258, and N318–D321. The region spanning R373–G457 is the KH-like domain.

It belongs to the TRAFAC class TrmE-Era-EngA-EngB-Septin-like GTPase superfamily. EngA (Der) GTPase family. Associates with the 50S ribosomal subunit.

In terms of biological role, GTPase that plays an essential role in the late steps of ribosome biogenesis. The protein is GTPase Der of Wolinella succinogenes (strain ATCC 29543 / DSM 1740 / CCUG 13145 / JCM 31913 / LMG 7466 / NCTC 11488 / FDC 602W) (Vibrio succinogenes).